A 342-amino-acid polypeptide reads, in one-letter code: Fatty acid desaturase 6 (342 aa).

The next 2 membrane-spanning stretches (helical) occupy residues 39–59 and 63–83; these read GVDC…FLCL and NILA…TLTV. Residues 87 to 91 carry the Histidine box-1 motif; that stretch reads HLATH. Residues 100-120 form a helical membrane-spanning segment; that stretch reads WSKILMIFFLEVCTAFSAEFA. Positions 124-128 match the Histidine box-2 motif; it reads HVNLH. A run of 2 helical transmembrane segments spans residues 151–171 and 185–205; these read YVYM…VALE and LGFI…VSGF. A Histidine box-3 motif is present at residues 277-281; that stretch reads HVEHH.

It belongs to the fatty acid desaturase type 1 family.

It localises to the membrane. It participates in lipid metabolism; fatty acid metabolism. The protein is Fatty acid desaturase 6 (Fads6) of Mus musculus (Mouse).